The chain runs to 346 residues: Small ribosomal subunit biogenesis GTPase RsgA 1 (346 aa).

Positions 93-248 constitute a CP-type G domain; it reads EEQLIAANFD…IIDTPGMREF (156 aa). GTP-binding positions include 138 to 141 and 190 to 198; these read TKAD and GSSGVGKSS. The Zn(2+) site is built by Cys-271, Cys-276, His-278, and Cys-284.

This sequence belongs to the TRAFAC class YlqF/YawG GTPase family. RsgA subfamily. Monomer. Associates with 30S ribosomal subunit, binds 16S rRNA. Zn(2+) is required as a cofactor.

The protein localises to the cytoplasm. Its function is as follows. One of several proteins that assist in the late maturation steps of the functional core of the 30S ribosomal subunit. Helps release RbfA from mature subunits. May play a role in the assembly of ribosomal proteins into the subunit. Circularly permuted GTPase that catalyzes slow GTP hydrolysis, GTPase activity is stimulated by the 30S ribosomal subunit. The protein is Small ribosomal subunit biogenesis GTPase RsgA 1 of Listeria innocua serovar 6a (strain ATCC BAA-680 / CLIP 11262).